The sequence spans 137 residues: MSTELIKTRAIYSGTGRRKCSVAQVRLVPGSGNLIINGIPGESYLQFSPNYLRVSYAPLQVLGLLNQYDIHVNARGGGLTGQADAIRLGVARALCSINPENRTTLKSEGYLTRDPRVKERKKYGLKKARKAPQFSKR.

A disordered region spans residues 106–137 (KSEGYLTRDPRVKERKKYGLKKARKAPQFSKR). Residues 118–137 (KERKKYGLKKARKAPQFSKR) are compositionally biased toward basic residues.

This sequence belongs to the universal ribosomal protein uS9 family.

The protein localises to the plastid. It is found in the chloroplast. The protein is Small ribosomal subunit protein uS9c (rps9) of Pyropia yezoensis (Susabi-nori).